The primary structure comprises 854 residues: pH-response regulator protein palA/prr-1 (854 aa).

Residues 5–402 (HVLSLPFRKS…SELESMTSQL (398 aa)) form the BRO1 domain. Residues 632-699 (RLDRLYESEL…DAAYYKYKEI (68 aa)) adopt a coiled-coil conformation. Disordered stretches follow at residues 739–782 (EEEI…EPIQ) and 801–854 (PQQQ…IRFG). The segment covering 746 to 759 (PLSSLNMHQSSFSY) has biased composition (polar residues). Residues 767–782 (QPPPPPPQIPFPEPIQ) are compositionally biased toward pro residues. Over residues 827–839 (QGQQHQQEQGQPG) the composition is skewed to low complexity.

The protein belongs to the palA/RIM20 family. Interacts with pacc-1 by binding to its two YPX[LI] motifs.

In terms of biological role, required for the proteolytic cleavage of the transcription factor pacc-1 in response to alkaline ambient pH. May act as a scaffold protein that recruits the calpain-like protease palB/cpr-8 via snf7/vps-3 to its substrate pacc-1. The sequence is that of pH-response regulator protein palA/prr-1 (prr-1) from Neurospora crassa (strain ATCC 24698 / 74-OR23-1A / CBS 708.71 / DSM 1257 / FGSC 987).